The chain runs to 171 residues: Apoptosis regulator Bcl-2 homolog (171 aa).

Interacts with host BECN1; this interaction inhibits host autophagy. Interacts with host BAK1 and BAX.

It is found in the host cytoplasm. Plays a role in the protection against apoptosis mediated by cytotoxic cells during the immune response to acute and persistent viral infection. Contributes therefore to latency establishment. Plays also a role in the inhibition of host starvation-induced autophagy which ultimately contributes to the viral chronic infection. This Murid herpesvirus 4 (MuHV-4) protein is Apoptosis regulator Bcl-2 homolog (vBCL2).